Here is a 31-residue protein sequence, read N- to C-terminus: Cyclotide vibi-F (31 aa).

A cross-link (cyclopeptide (Gly-Asn)) is located at residues 1–31 (GTIPCGESCVFIPCLTSALGCSCKSKVCYKN). 3 cysteine pairs are disulfide-bonded: Cys-5/Cys-21, Cys-9/Cys-23, and Cys-14/Cys-28.

This is a cyclic peptide.

Its function is as follows. Probably participates in a plant defense mechanism. This chain is Cyclotide vibi-F, found in Viola biflora (Yellow wood violet).